Consider the following 123-residue polypeptide: Small ribosomal subunit protein uS13 (123 aa).

The disordered stretch occupies residues 94 to 123 (GLPVRGQSTKSNARTRKGPRKTVAGKKSTK). Residues 106–123 (ARTRKGPRKTVAGKKSTK) are compositionally biased toward basic residues.

The protein belongs to the universal ribosomal protein uS13 family. Part of the 30S ribosomal subunit. Forms a loose heterodimer with protein S19. Forms two bridges to the 50S subunit in the 70S ribosome.

Located at the top of the head of the 30S subunit, it contacts several helices of the 16S rRNA. In the 70S ribosome it contacts the 23S rRNA (bridge B1a) and protein L5 of the 50S subunit (bridge B1b), connecting the 2 subunits; these bridges are implicated in subunit movement. Contacts the tRNAs in the A and P-sites. This is Small ribosomal subunit protein uS13 from Mycoplasmopsis agalactiae (strain NCTC 10123 / CIP 59.7 / PG2) (Mycoplasma agalactiae).